Here is a 538-residue protein sequence, read N- to C-terminus: Acetylcholine receptor subunit alpha-type acr-7 (538 aa).

Residues 1-27 (MMVQSIQIVLPVALFFLIVFNGFTVEG) form the signal peptide. Over 28-250 (SKKEAQLYRD…LHLRRRTFYY (223 aa)) the chain is Extracellular. N-linked (GlcNAc...) asparagine glycans are attached at residues asparagine 41 and asparagine 101. Intrachain disulfides connect cysteine 160/cysteine 174 and cysteine 229/cysteine 230. A run of 3 helical transmembrane segments spans residues 251–271 (VFNV…AFCL), 280–300 (IGLQ…LSEM), and 313–333 (VFFS…ILVL). Topologically, residues 334-513 (NIRYRQITNH…FAAQAVDRFC (180 aa)) are cytoplasmic. Residues 514-534 (LIIFTIVFIICCFIFVAIPPI) form a helical membrane-spanning segment.

The protein belongs to the ligand-gated ion channel (TC 1.A.9) family. Acetylcholine receptor (TC 1.A.9.1) subfamily. As to quaternary structure, forms a homooligomeric channel blocked by alpha-bungarotoxin. The structure is probably pentameric.

The protein localises to the postsynaptic cell membrane. The protein resides in the cell membrane. After binding acetylcholine, the AChR responds by an extensive change in conformation that affects all subunits and leads to opening of an ion-conducting channel across the plasma membrane. The sequence is that of Acetylcholine receptor subunit alpha-type acr-7 (acr-7) from Caenorhabditis elegans.